The sequence spans 340 residues: Cytosolic Fe-S cluster assembly factor NBP35 (340 aa).

The [4Fe-4S] cluster site is built by Cys-31, Cys-45, Cys-48, and Cys-54. 84–91 lines the ATP pocket; that stretch reads GKGGVGKS. [4Fe-4S] cluster is bound by residues Cys-257 and Cys-260.

Belongs to the Mrp/NBP35 ATP-binding proteins family. NUBP1/NBP35 subfamily. As to quaternary structure, heterotetramer of 2 NBP35 and 2 CFD1 chains. [4Fe-4S] cluster is required as a cofactor.

It is found in the cytoplasm. In terms of biological role, component of the cytosolic iron-sulfur (Fe/S) protein assembly (CIA) machinery. Required for maturation of extramitochondrial Fe-S proteins. The NBP35-CFD1 heterotetramer forms a Fe-S scaffold complex, mediating the de novo assembly of an Fe-S cluster and its transfer to target apoproteins. This Phaeosphaeria nodorum (strain SN15 / ATCC MYA-4574 / FGSC 10173) (Glume blotch fungus) protein is Cytosolic Fe-S cluster assembly factor NBP35.